Here is a 340-residue protein sequence, read N- to C-terminus: GTPase Obg (340 aa).

The Obg domain maps to 1-158; it reads MSFIDEAKVY…KWIILKLKII (158 aa). An OBG-type G domain is found at 159-325; that stretch reads SDVGIIGLPN…LSILIKHINK (167 aa). Residues 165 to 172, 190 to 194, 211 to 214, 278 to 281, and 306 to 308 contribute to the GTP site; these read GLPNAGKS, FTTLE, DIPG, NKCD, and SSI. Ser-172 and Thr-192 together coordinate Mg(2+).

This sequence belongs to the TRAFAC class OBG-HflX-like GTPase superfamily. OBG GTPase family. In terms of assembly, monomer. Mg(2+) serves as cofactor.

The protein localises to the cytoplasm. Functionally, an essential GTPase which binds GTP, GDP and possibly (p)ppGpp with moderate affinity, with high nucleotide exchange rates and a fairly low GTP hydrolysis rate. Plays a role in control of the cell cycle, stress response, ribosome biogenesis and in those bacteria that undergo differentiation, in morphogenesis control. This is GTPase Obg from Ehrlichia ruminantium (strain Gardel).